A 286-amino-acid chain; its full sequence is Formamidopyrimidine-DNA glycosylase (286 aa).

Residue Pro2 is the Schiff-base intermediate with DNA of the active site. Catalysis depends on Glu3, which acts as the Proton donor. The active-site Proton donor; for beta-elimination activity is Lys61. DNA contacts are provided by His96, Arg115, and Lys161. The FPG-type zinc finger occupies 247–281 (EAYGREGEPCRRCGRAMRREAFMNRSSYFCPSCQR). Arg271 functions as the Proton donor; for delta-elimination activity in the catalytic mechanism.

Belongs to the FPG family. As to quaternary structure, monomer. Zn(2+) is required as a cofactor.

It carries out the reaction Hydrolysis of DNA containing ring-opened 7-methylguanine residues, releasing 2,6-diamino-4-hydroxy-5-(N-methyl)formamidopyrimidine.. The catalysed reaction is 2'-deoxyribonucleotide-(2'-deoxyribose 5'-phosphate)-2'-deoxyribonucleotide-DNA = a 3'-end 2'-deoxyribonucleotide-(2,3-dehydro-2,3-deoxyribose 5'-phosphate)-DNA + a 5'-end 5'-phospho-2'-deoxyribonucleoside-DNA + H(+). In terms of biological role, involved in base excision repair of DNA damaged by oxidation or by mutagenic agents. Acts as a DNA glycosylase that recognizes and removes damaged bases. Has a preference for oxidized purines, such as 7,8-dihydro-8-oxoguanine (8-oxoG). Has AP (apurinic/apyrimidinic) lyase activity and introduces nicks in the DNA strand. Cleaves the DNA backbone by beta-delta elimination to generate a single-strand break at the site of the removed base with both 3'- and 5'-phosphates. The chain is Formamidopyrimidine-DNA glycosylase from Mycobacteroides abscessus (strain ATCC 19977 / DSM 44196 / CCUG 20993 / CIP 104536 / JCM 13569 / NCTC 13031 / TMC 1543 / L948) (Mycobacterium abscessus).